Here is a 234-residue protein sequence, read N- to C-terminus: Sugar fermentation stimulation protein A (234 aa).

The segment at residues 201 to 220 (LLSEAQNKGVEVLAYKAELS) is a DNA-binding region (H-T-H motif).

Belongs to the SfsA family.

Functionally, binds to DNA non-specifically. Could be a regulatory factor involved in maltose metabolism. In Salmonella gallinarum (strain 287/91 / NCTC 13346), this protein is Sugar fermentation stimulation protein A.